Reading from the N-terminus, the 268-residue chain is Pantothenate synthetase (268 aa).

ATP is bound at residue 18–25; sequence MGYLHEGH. The active-site Proton donor is H25. Q49 is a binding site for (R)-pantoate. Residue Q49 coordinates beta-alanine. 135 to 138 contributes to the ATP binding site; sequence GQKD. Q141 serves as a coordination point for (R)-pantoate. Residues I164 and 172 to 175 each bind ATP; that span reads LSSR.

Belongs to the pantothenate synthetase family. Homodimer.

It localises to the cytoplasm. It carries out the reaction (R)-pantoate + beta-alanine + ATP = (R)-pantothenate + AMP + diphosphate + H(+). It functions in the pathway cofactor biosynthesis; (R)-pantothenate biosynthesis; (R)-pantothenate from (R)-pantoate and beta-alanine: step 1/1. Its function is as follows. Catalyzes the condensation of pantoate with beta-alanine in an ATP-dependent reaction via a pantoyl-adenylate intermediate. The polypeptide is Pantothenate synthetase (Dehalococcoides mccartyi (strain CBDB1)).